Consider the following 171-residue polypeptide: MVILGIDPGSRITGFGVIKVQDNKIYYVASGCIRITEITTPKRLKQIADGITQIINIYAPTEAAIEQIFMFQNPMGAIKLGQARGVAMCTLAINNLEVSEYSAKQIKQAVVGTGGAAKSQVQHMVQSLLGLSKKPPEDAADALAIAICHYHSSKSLAKISGASRVSQKRIK.

Catalysis depends on residues aspartate 7, glutamate 66, and aspartate 138. Residues aspartate 7, glutamate 66, and aspartate 138 each coordinate Mg(2+).

The protein belongs to the RuvC family. Homodimer which binds Holliday junction (HJ) DNA. The HJ becomes 2-fold symmetrical on binding to RuvC with unstacked arms; it has a different conformation from HJ DNA in complex with RuvA. In the full resolvosome a probable DNA-RuvA(4)-RuvB(12)-RuvC(2) complex forms which resolves the HJ. The cofactor is Mg(2+).

It is found in the cytoplasm. The catalysed reaction is Endonucleolytic cleavage at a junction such as a reciprocal single-stranded crossover between two homologous DNA duplexes (Holliday junction).. In terms of biological role, the RuvA-RuvB-RuvC complex processes Holliday junction (HJ) DNA during genetic recombination and DNA repair. Endonuclease that resolves HJ intermediates. Cleaves cruciform DNA by making single-stranded nicks across the HJ at symmetrical positions within the homologous arms, yielding a 5'-phosphate and a 3'-hydroxyl group; requires a central core of homology in the junction. The consensus cleavage sequence is 5'-(A/T)TT(C/G)-3'. Cleavage occurs on the 3'-side of the TT dinucleotide at the point of strand exchange. HJ branch migration catalyzed by RuvA-RuvB allows RuvC to scan DNA until it finds its consensus sequence, where it cleaves and resolves the cruciform DNA. This chain is Crossover junction endodeoxyribonuclease RuvC, found in Francisella tularensis subsp. mediasiatica (strain FSC147).